The primary structure comprises 504 residues: UDP-N-acetylmuramoylalanine--D-glutamate ligase (504 aa).

ATP is bound at residue 132 to 138 (GTNGKTT). The tract at residues 284-310 (AQDRDATDEPAPTRRRKSESTAPPDIG) is disordered.

This sequence belongs to the MurCDEF family.

It is found in the cytoplasm. It catalyses the reaction UDP-N-acetyl-alpha-D-muramoyl-L-alanine + D-glutamate + ATP = UDP-N-acetyl-alpha-D-muramoyl-L-alanyl-D-glutamate + ADP + phosphate + H(+). It functions in the pathway cell wall biogenesis; peptidoglycan biosynthesis. Its function is as follows. Cell wall formation. Catalyzes the addition of glutamate to the nucleotide precursor UDP-N-acetylmuramoyl-L-alanine (UMA). This Paraburkholderia phymatum (strain DSM 17167 / CIP 108236 / LMG 21445 / STM815) (Burkholderia phymatum) protein is UDP-N-acetylmuramoylalanine--D-glutamate ligase.